The primary structure comprises 269 residues: AA9 family lytic polysaccharide monooxygenase I (269 aa).

Positions 1–17 are cleaved as a signal peptide; sequence MFSKKITALALVSAVKA. The Cu(2+) site is built by H18 and H103. A disulfide bridge connects residues C73 and C196. N156 carries N-linked (GlcNAc...) asparagine glycosylation. H182 and Q191 together coordinate O2. Y193 provides a ligand contact to Cu(2+).

This sequence belongs to the polysaccharide monooxygenase AA9 family. Cu(2+) serves as cofactor.

It is found in the secreted. It carries out the reaction [(1-&gt;4)-beta-D-glucosyl]n+m + reduced acceptor + O2 = 4-dehydro-beta-D-glucosyl-[(1-&gt;4)-beta-D-glucosyl]n-1 + [(1-&gt;4)-beta-D-glucosyl]m + acceptor + H2O.. In terms of biological role, lytic polysaccharide monooxygenase (LPMO) that depolymerizes crystalline and amorphous polysaccharides via the oxidation of scissile alpha- or beta-(1-4)-glycosidic bonds, yielding C1 and C4 oxidation products. Catalysis by LPMOs requires the reduction of the active-site copper from Cu(II) to Cu(I) by a reducing agent and H(2)O(2) or O(2) as a cosubstrate. The polypeptide is AA9 family lytic polysaccharide monooxygenase I (Botryotinia fuckeliana (strain B05.10) (Noble rot fungus)).